The chain runs to 366 residues: Peptide chain release factor 2 (366 aa).

Residue Gln251 is modified to N5-methylglutamine.

It belongs to the prokaryotic/mitochondrial release factor family. Methylated by PrmC. Methylation increases the termination efficiency of RF2.

The protein resides in the cytoplasm. Functionally, peptide chain release factor 2 directs the termination of translation in response to the peptide chain termination codons UGA and UAA. The polypeptide is Peptide chain release factor 2 (Exiguobacterium sp. (strain ATCC BAA-1283 / AT1b)).